A 68-amino-acid polypeptide reads, in one-letter code: Probable Sec-independent protein translocase protein TatE (68 aa).

The helical transmembrane segment at 1 to 21 (MGEISITKLLVVAALIILVFG) threads the bilayer. Positions 43–68 (MNEDDDSAKKTTAEEEAPAQKLSHKE) are disordered.

This sequence belongs to the TatA/E family. TatE subfamily.

It localises to the cell inner membrane. Its function is as follows. Part of the twin-arginine translocation (Tat) system that transports large folded proteins containing a characteristic twin-arginine motif in their signal peptide across membranes. TatE shares overlapping functions with TatA. The chain is Probable Sec-independent protein translocase protein TatE from Klebsiella pneumoniae subsp. pneumoniae (strain ATCC 700721 / MGH 78578).